Here is a 318-residue protein sequence, read N- to C-terminus: Biotin synthase (318 aa).

Residues 44 to 273 (LCGNKFDLCT…TVQIRLAGGR (230 aa)) form the Radical SAM core domain. [4Fe-4S] cluster contacts are provided by Cys-62, Cys-66, and Cys-69. The [2Fe-2S] cluster site is built by Ser-106, Cys-138, Cys-198, and Arg-268.

This sequence belongs to the radical SAM superfamily. Biotin synthase family. In terms of assembly, homodimer. The cofactor is [4Fe-4S] cluster. [2Fe-2S] cluster serves as cofactor.

It catalyses the reaction (4R,5S)-dethiobiotin + (sulfur carrier)-SH + 2 reduced [2Fe-2S]-[ferredoxin] + 2 S-adenosyl-L-methionine = (sulfur carrier)-H + biotin + 2 5'-deoxyadenosine + 2 L-methionine + 2 oxidized [2Fe-2S]-[ferredoxin]. The protein operates within cofactor biosynthesis; biotin biosynthesis; biotin from 7,8-diaminononanoate: step 2/2. Its function is as follows. Catalyzes the conversion of dethiobiotin (DTB) to biotin by the insertion of a sulfur atom into dethiobiotin via a radical-based mechanism. The polypeptide is Biotin synthase (Clostridium botulinum (strain Hall / ATCC 3502 / NCTC 13319 / Type A)).